The chain runs to 436 residues: 3-phosphoshikimate 1-carboxyvinyltransferase (436 aa).

Residues K23, S24, and R28 each contribute to the 3-phosphoshikimate site. K23 serves as a coordination point for phosphoenolpyruvate. Residues G97 and R126 each contribute to the phosphoenolpyruvate site. Positions 171, 173, 323, and 350 each coordinate 3-phosphoshikimate. A phosphoenolpyruvate-binding site is contributed by Q173. Residue D323 is the Proton acceptor of the active site. 2 residues coordinate phosphoenolpyruvate: R354 and R396.

The protein belongs to the EPSP synthase family. As to quaternary structure, monomer.

The protein resides in the cytoplasm. The enzyme catalyses 3-phosphoshikimate + phosphoenolpyruvate = 5-O-(1-carboxyvinyl)-3-phosphoshikimate + phosphate. It participates in metabolic intermediate biosynthesis; chorismate biosynthesis; chorismate from D-erythrose 4-phosphate and phosphoenolpyruvate: step 6/7. Functionally, catalyzes the transfer of the enolpyruvyl moiety of phosphoenolpyruvate (PEP) to the 5-hydroxyl of shikimate-3-phosphate (S3P) to produce enolpyruvyl shikimate-3-phosphate and inorganic phosphate. This Prochlorococcus marinus (strain AS9601) protein is 3-phosphoshikimate 1-carboxyvinyltransferase.